Reading from the N-terminus, the 464-residue chain is MAAQPPRPVGERSMGSSREAARAPARSPAWASTQASTPGAALAVQRESPESGLQKHYSNLCMEKSQKINPFILHILQEVDEEIKKGLAAGITLNIAGNNRLVPVERVTGEDFWILSKILKNCLYINGLDVGYNLLCDVGAYYAAKLLQKQLNLIYLNLMFNDIGPEGGELIAKVLHKNRTLKYLRMTGNKIENKGGMFFAAMLQINSSLEKLDLGDCDLGMQSVIAFATVLTQNQAIKAINLNRPILYSEQEESTVHVGRMLKENHCLVALHMCKHDIKNSGIQQLCDALYLNSSLRYLDVSCNKITHDGMVYLADVLKSNTTLEVIDLSFNRIENAGANYLSETLTSHNRSLKALSVVSNNIEGEGLVALSQSMKTNLTFSHIYIWGNKFDEATCIAYSDLIQMGCLKPDNTDVEPFVVDGRVYLAEVSNGLKKHYYWTSTYGESYDHSSNAGFALVPVGQQP.

The segment at M1–S48 is disordered. Residues S16–S32 are compositionally biased toward low complexity. 2 LRR repeats span residues S295–A315 and T323–T345.

As to quaternary structure, interacts with NPM1 and NCL.

The protein localises to the nucleus. It is found in the nucleolus. Its subcellular location is the cytoplasm. Functionally, highly expressed in stem cells where it may be involved in regulation of pluripotency. In embryonic stem cells (ESCs), important for normal expression of the pluripotency regulators POU5F1/OCT4 and KLF4. Also important for expression of the ectodermal marker gene NES and the endodermal marker gene GATA4. Promotes stem cell proliferation in vitro. This is Leucine-rich repeat-containing protein 34 (LRRC34) from Homo sapiens (Human).